The primary structure comprises 400 residues: Acetate kinase (400 aa).

N10 is a binding site for Mg(2+). Residue K17 coordinates ATP. R91 serves as a coordination point for substrate. D150 acts as the Proton donor/acceptor in catalysis. Residues 210 to 214 (HLGNG), 285 to 287 (DCR), and 333 to 337 (GIGEN) contribute to the ATP site. E387 contributes to the Mg(2+) binding site.

This sequence belongs to the acetokinase family. In terms of assembly, homodimer. Mg(2+) serves as cofactor. It depends on Mn(2+) as a cofactor.

Its subcellular location is the cytoplasm. The catalysed reaction is acetate + ATP = acetyl phosphate + ADP. The protein operates within metabolic intermediate biosynthesis; acetyl-CoA biosynthesis; acetyl-CoA from acetate: step 1/2. Its function is as follows. Catalyzes the formation of acetyl phosphate from acetate and ATP. Can also catalyze the reverse reaction. The protein is Acetate kinase of Proteus mirabilis (strain HI4320).